The primary structure comprises 139 residues: 2S seed storage albumin protein (139 aa).

The N-terminal stretch at 1–15 is a signal peptide; it reads AALLVALLFVANAAA. IgE-binding stretches follow at residues 16 to 30, 29 to 34, 64 to 78, 65 to 73, 95 to 103, 99 to 111, 102 to 114, 105 to 117, 112 to 126, 125 to 136, and 125 to 139; these read FRTTITTMEIDEDID, IDNPRR, GYDEDNQRQHFRQCC, YDEDNQRQH, QVVRRQQQQ, RQQQQQGLRGEEM, QQQGLRGEEMEEM, GLRGEEMEEMVQS, EEMVQSARDLPNECG, CGISSQRCEIRR, and CGISSQRCEIRRSWF. 2 propeptides span residues 16-31 and 58-71; these read FRTTITTMEIDEDIDN and QQSRSGGYDEDNQR. 4 disulfides stabilise this stretch: C39–C88, C52–C77, C78–C125, and C90–C132. Positions 104-115 are immunodominant epitope. IgE-binding; binds to IgE in 75% of the 20 walnut-allergic patients tested; it reads QGLRGEEMEEMV. Residues 107–110 form a minimally required for IgE-binding by the immunodominant epitope region; the sequence is RGEE. Positions 136–139 are excised as a propeptide; it reads RSWF.

The protein belongs to the 2S seed storage albumins family. The mature protein consists of a small chain and a large chain linked by disulfide bonds. As to expression, expressed in seed (at protein level). Expressed in the peel of mature seed.

Functionally, seed storage protein. This Juglans regia (English walnut) protein is 2S seed storage albumin protein.